The following is a 247-amino-acid chain: VQ motif-containing protein 4 (247 aa).

A disordered region spans residues 1–128; that stretch reads MENSPRYREA…SSSSASGFRL (128 aa). At Ser-16 the chain carries Phosphoserine. The segment covering 21 to 37 has biased composition (low complexity); sequence NSNNSCGMSSSSESNKP. Composition is skewed to polar residues over residues 48–75 and 87–106; these read RSES…QMLT and LKPN…SSFS. Residues 67 to 76 carry the VQ motif; it reads FKQVVQMLTG. Residues Ser-106, Ser-155, Ser-163, Ser-165, and Ser-175 each carry the phosphoserine modification. A Phosphothreonine modification is found at Thr-178. A disordered region spans residues 184 to 247; it reads PFDRSGSSNQ…VSGSSSASTS (64 aa). A Phosphoserine modification is found at Ser-194. A compositionally biased stretch (basic and acidic residues) spans 200-210; sequence AEEKAMKERGF. Ser-215 carries the post-translational modification Phosphoserine. 2 positions are modified to phosphothreonine: Thr-219 and Thr-234. Residues Ser-235, Ser-239, and Ser-243 each carry the phosphoserine modification. Polar residues predominate over residues 236–247; that stretch reads PRVSGSSSASTS.

In terms of assembly, interacts with MPK3 and MPK6. Post-translationally, phosphorylated on serine and threonine residues by MPK6 following treatment with the pathogen-associated molecular pattern (PAMP) flg22. MAP kinase-mediated phosphorylation after PAMP elicitation causes degradation of VQ4, allowing WRKY33 to promote transcription from defense genes.

The protein localises to the nucleus. Acts as a negative regulator of WRKY33 transcription factor activity in the promotion of defense gene expression. Acts as a negative regulator of pathogen-associated molecular pattern (PAMP)-induced responses to modulate resistance to pathogens. This chain is VQ motif-containing protein 4, found in Arabidopsis thaliana (Mouse-ear cress).